The sequence spans 138 residues: Thyrotropin subunit beta (138 aa).

Residues 1 to 20 (MTATFLMSMIFGLACGQAMS) form the signal peptide. Disulfide bonds link Cys22–Cys72, Cys36–Cys87, Cys39–Cys125, Cys47–Cys103, Cys51–Cys105, and Cys108–Cys115. Residue Asn43 is glycosylated (N-linked (GlcNAc...) asparagine). The propeptide occupies 133–138 (MVGFSI).

Belongs to the glycoprotein hormones subunit beta family. As to quaternary structure, heterodimer of a common alpha chain and a unique beta chain which confers biological specificity to thyrotropin, lutropin, follitropin and gonadotropin.

The protein localises to the secreted. Its function is as follows. Indispensable for the control of thyroid structure and metabolism. The chain is Thyrotropin subunit beta (TSHB) from Bos taurus (Bovine).